Here is a 230-residue protein sequence, read N- to C-terminus: Spliceosome-associated protein CWC15 homolog (230 aa).

2 disordered regions span residues M1–Q157 and A164–F183. Residues K25 to D34 show a composition bias toward polar residues. 2 coiled-coil regions span residues G47–S82 and D119–A164. A compositionally biased stretch (basic and acidic residues) spans A52–D78. The segment covering D104 to T125 has biased composition (acidic residues). Positions E131–Q157 are enriched in basic and acidic residues.

The protein belongs to the CWC15 family. Component of spliceosomal complex.

The protein resides in the nucleus. Component of a spliceosomal complex that is required for activating pre-mRNA splicing. This chain is Spliceosome-associated protein CWC15 homolog, found in Caenorhabditis elegans.